Consider the following 142-residue polypeptide: Hemoglobin subunit alpha-A (142 aa).

Residues 2–142 (VLSAADKTNV…VGTVLTAKYR (141 aa)) form the Globin domain. Histidine 59 is a binding site for O2. Histidine 88 is a heme b binding site.

This sequence belongs to the globin family. Heterotetramer of two alpha chains and two beta chains. As to expression, red blood cells.

Functionally, involved in oxygen transport from the lung to the various peripheral tissues. The protein is Hemoglobin subunit alpha-A (HBAA) of Anser indicus (Bar-headed goose).